We begin with the raw amino-acid sequence, 137 residues long: Large ribosomal subunit protein mL61 (137 aa).

It belongs to the mitochondrion-specific ribosomal protein mL61 family. Component of the mitochondrial large ribosomal subunit (mt-LSU). Mature yeast 74S mitochondrial ribosomes consist of a small (37S) and a large (54S) subunit. The 37S small subunit contains a 15S ribosomal RNA (15S mt-rRNA) and 34 different proteins. The 54S large subunit contains a 21S rRNA (21S mt-rRNA) and 46 different proteins.

The protein resides in the mitochondrion. Functionally, component of the mitochondrial ribosome (mitoribosome), a dedicated translation machinery responsible for the synthesis of mitochondrial genome-encoded proteins, including at least some of the essential transmembrane subunits of the mitochondrial respiratory chain. The mitoribosomes are attached to the mitochondrial inner membrane and translation products are cotranslationally integrated into the membrane. mL61 is not essential in cells grown at 30 degrees Celsius but is required for mitochondrial translation in cells grown at 18 degrees Celsius. The polypeptide is Large ribosomal subunit protein mL61 (MRP49) (Saccharomyces cerevisiae (strain ATCC 204508 / S288c) (Baker's yeast)).